The primary structure comprises 469 residues: 3-isopropylmalate dehydratase large subunit (469 aa).

3 residues coordinate [4Fe-4S] cluster: C346, C406, and C409.

It belongs to the aconitase/IPM isomerase family. LeuC type 1 subfamily. As to quaternary structure, heterodimer of LeuC and LeuD. Requires [4Fe-4S] cluster as cofactor.

It carries out the reaction (2R,3S)-3-isopropylmalate = (2S)-2-isopropylmalate. The protein operates within amino-acid biosynthesis; L-leucine biosynthesis; L-leucine from 3-methyl-2-oxobutanoate: step 2/4. Catalyzes the isomerization between 2-isopropylmalate and 3-isopropylmalate, via the formation of 2-isopropylmaleate. The chain is 3-isopropylmalate dehydratase large subunit from Lysinibacillus sphaericus (strain C3-41).